A 296-amino-acid polypeptide reads, in one-letter code: Nucleotide-binding protein M28_Spy0517 (296 aa).

13–20 (GMSGAGKT) serves as a coordination point for ATP. Residue 63–66 (DMRS) coordinates GTP.

The protein belongs to the RapZ-like family.

Displays ATPase and GTPase activities. This Streptococcus pyogenes serotype M28 (strain MGAS6180) protein is Nucleotide-binding protein M28_Spy0517.